The sequence spans 282 residues: 4-hydroxy-tetrahydrodipicolinate reductase (282 aa).

Residues 14–19 and 115–117 each bind NAD(+); these read GAMGRM and GTT. His171 (proton donor/acceptor) is an active-site residue. His172 serves as a coordination point for (S)-2,3,4,5-tetrahydrodipicolinate. Lys175 (proton donor) is an active-site residue. 181–182 contributes to the (S)-2,3,4,5-tetrahydrodipicolinate binding site; sequence GT.

The protein belongs to the DapB family.

The protein localises to the cytoplasm. It catalyses the reaction (S)-2,3,4,5-tetrahydrodipicolinate + NAD(+) + H2O = (2S,4S)-4-hydroxy-2,3,4,5-tetrahydrodipicolinate + NADH + H(+). It carries out the reaction (S)-2,3,4,5-tetrahydrodipicolinate + NADP(+) + H2O = (2S,4S)-4-hydroxy-2,3,4,5-tetrahydrodipicolinate + NADPH + H(+). It participates in amino-acid biosynthesis; L-lysine biosynthesis via DAP pathway; (S)-tetrahydrodipicolinate from L-aspartate: step 4/4. Functionally, catalyzes the conversion of 4-hydroxy-tetrahydrodipicolinate (HTPA) to tetrahydrodipicolinate. The sequence is that of 4-hydroxy-tetrahydrodipicolinate reductase from Prochlorococcus marinus (strain NATL2A).